The following is a 142-amino-acid chain: Protein CPn_0742/CP_0003/CPj0742/CpB0770 (142 aa).

Positions 115–142 (LHPTKESKRPKQKLSSTKKNKKKNWIPL) are disordered. Residues 124–142 (PKQKLSSTKKNKKKNWIPL) are compositionally biased toward basic residues.

Belongs to the chlamydial CPn_0742/CT_635/TC_0003 family.

The polypeptide is Protein CPn_0742/CP_0003/CPj0742/CpB0770 (Chlamydia pneumoniae (Chlamydophila pneumoniae)).